Consider the following 421-residue polypeptide: Gamma-glutamyl phosphate reductase (421 aa).

It belongs to the gamma-glutamyl phosphate reductase family.

The protein resides in the cytoplasm. It catalyses the reaction L-glutamate 5-semialdehyde + phosphate + NADP(+) = L-glutamyl 5-phosphate + NADPH + H(+). The protein operates within amino-acid biosynthesis; L-proline biosynthesis; L-glutamate 5-semialdehyde from L-glutamate: step 2/2. Catalyzes the NADPH-dependent reduction of L-glutamate 5-phosphate into L-glutamate 5-semialdehyde and phosphate. The product spontaneously undergoes cyclization to form 1-pyrroline-5-carboxylate. The polypeptide is Gamma-glutamyl phosphate reductase (Shewanella pealeana (strain ATCC 700345 / ANG-SQ1)).